Reading from the N-terminus, the 874-residue chain is Endothelial PAS domain-containing protein 1 (874 aa).

The disordered stretch occupies residues 1 to 23 (MTADKEKKRSSSELRKEKSRDAA). A bHLH domain is found at 14–67 (LRKEKSRDAARCRRSKETEVFYELAHELPLPHSVSSHLDKASIMRLAISFLRTH). The tract at residues 26-53 (RRSKETEVFYELAHELPLPHSVSSHLDK) is DNA-binding. A PAS 1 domain is found at 84-154 (DQQMDNLYLK…ENLTLKNGSG (71 aa)). Positions 171–192 (RMKCTVTNRGRTVNLKSATWKV) are required for heterodimer formation with ARNT. Residues 230-300 (QHPSHMDIPL…KSHQNLCTKG (71 aa)) form the PAS 2 domain. The 44-residue stretch at 304–347 (SGQYRMLAKHGGYVWLETQGTVIYNPRNLQPQCIMCVNYVLSEI) folds into the PAC domain. A 4-hydroxyproline modification is found at P405. A disordered region spans residues 438–489 (WVSGLRSHSAQSESGSLPAFTVPQADTPGNTTPSASSSSSCSTPSSPEDYYS). A compositionally biased stretch (polar residues) spans 443–452 (RSHSAQSESG). The segment covering 464-484 (TPGNTTPSASSSSSCSTPSSP) has biased composition (low complexity). Positions 495–541 (LKIEVIEKLFAMDTEPRDPGSTQTDFSELDLETLAPYIPMDGEDFQL) are NTAD. P530 is modified (4-hydroxyproline). The interval 777–803 (LGQPLRHLPPPQPPSTRSSGENAKTGF) is disordered. Residues 834 to 874 (SFEPYLLPELTRYDCEVNVPVPGSSTLLQGRDLLRALDQAT) form a CTAD region. T844 is subject to Phosphothreonine. Position 851 is a (3S)-3-hydroxyasparagine (N851).

As to quaternary structure, interacts with HIF3A isoform 2. Efficient DNA binding requires dimerization with another bHLH protein. Heterodimerizes with ARNT; heterodimer binds to core DNA sequence 5'-TACGTG-3' within the hypoxia response element (HRE) of target gene promoters. Interacts with CREBBP. Interacts with EGLN1. Interacts with VHL. In terms of processing, in normoxia, is probably hydroxylated on Pro-405 and Pro-530 by EGLN1/PHD1, EGLN2/PHD2 and/or EGLN3/PHD3. The hydroxylated prolines promote interaction with VHL, initiating rapid ubiquitination and subsequent proteasomal degradation. Under hypoxia, proline hydroxylation is impaired and ubiquitination is attenuated, resulting in stabilization. Post-translationally, in normoxia, is hydroxylated on Asn-851 by HIF1AN thus probably abrogating interaction with CREBBP and EP300 and preventing transcriptional activation. Phosphorylated on multiple sites in the CTAD. In terms of processing, the iron and 2-oxoglutarate dependent 3-hydroxylation of asparagine is (S) stereospecific within HIF CTAD domains. As to expression, expressed in most tissues, with highest levels in lung, followed by heart, kidney, brain and liver. Predominantly expressed in endothelial cells. Also found in smooth muscle cells of the uterus, neurons, and brown adipose tissue. High expression in embryonic choroid plexus and kidney glomeruli.

It localises to the nucleus. Its subcellular location is the nucleus speckle. Transcription factor involved in the induction of oxygen regulated genes. Heterodimerizes with ARNT; heterodimer binds to core DNA sequence 5'-TACGTG-3' within the hypoxia response element (HRE) of target gene promoters. Regulates the vascular endothelial growth factor (VEGF) expression and seems to be implicated in the development of blood vessels and the tubular system of lung. May also play a role in the formation of the endothelium that gives rise to the blood brain barrier. Potent activator of the Tie-2 tyrosine kinase expression. Activation requires recruitment of transcriptional coactivators such as CREBBP and probably EP300. Interaction with redox regulatory protein APEX seems to activate CTAD. The polypeptide is Endothelial PAS domain-containing protein 1 (Epas1) (Mus musculus (Mouse)).